The following is a 224-amino-acid chain: MASPSFCLLAALLALVSWQAIASDPSPLQDFCVADKHSPVLVNGFACLDPKYVTADHFFKAAMLDTPRKTNKVGSNVTLINVMQIPGLNTLGISIARIDYAPLGENPPHTHPRATEILTVLEGTLYVGFVTSNPNNTLFSKVLNKGDVFVFPEGLIHFQFNPNPHQPAVAIAALSSQNPGAITIANAVFGSKPPISDKVLAKAFQVEKGTIDWLQAQFWENNHY.

A signal peptide spans 1-22 (MASPSFCLLAALLALVSWQAIA). An intrachain disulfide couples Cys32 to Cys47. The Cupin type-1 domain occupies 62–212 (AMLDTPRKTN…AFQVEKGTID (151 aa)). An N-linked (GlcNAc...) asparagine glycan is attached at Asn76. The Mn(2+) site is built by His109, His111, and Glu116. N-linked (GlcNAc...) asparagine glycosylation occurs at Asn135. His157 is a Mn(2+) binding site.

This sequence belongs to the germin family. Oligomer (believed to be a pentamer but probably hexamer).

Its subcellular location is the secreted. It is found in the extracellular space. The protein resides in the apoplast. Functionally, plays a role in broad-spectrum disease resistance. Probably has no oxalate oxidase activity even if the active site is conserved. The sequence is that of Germin-like protein 8-8 from Oryza sativa subsp. japonica (Rice).